Here is a 983-residue protein sequence, read N- to C-terminus: Isoleucine--tRNA ligase (983 aa).

Residues 61–71 carry the 'HIGH' region motif; it reads PYANGELHVGH. L-isoleucyl-5'-AMP is bound at residue E608. The 'KMSKS' region signature appears at 649-653; sequence KMSKS. K652 lines the ATP pocket. The Zn(2+) site is built by C952, C955, C972, and C975.

It belongs to the class-I aminoacyl-tRNA synthetase family. IleS type 1 subfamily. Monomer. The cofactor is Zn(2+).

The protein localises to the cytoplasm. It carries out the reaction tRNA(Ile) + L-isoleucine + ATP = L-isoleucyl-tRNA(Ile) + AMP + diphosphate. In terms of biological role, catalyzes the attachment of isoleucine to tRNA(Ile). As IleRS can inadvertently accommodate and process structurally similar amino acids such as valine, to avoid such errors it has two additional distinct tRNA(Ile)-dependent editing activities. One activity is designated as 'pretransfer' editing and involves the hydrolysis of activated Val-AMP. The other activity is designated 'posttransfer' editing and involves deacylation of mischarged Val-tRNA(Ile). The polypeptide is Isoleucine--tRNA ligase (Gloeobacter violaceus (strain ATCC 29082 / PCC 7421)).